Consider the following 180-residue polypeptide: Photosystem II extrinsic protein V (180 aa).

Residues methionine 1–alanine 40 form the signal peptide. Heme c-binding residues include cysteine 73, cysteine 76, histidine 77, and histidine 128.

It belongs to the cytochrome c family. PsbV subfamily. As to quaternary structure, PSII is composed of 1 copy each of membrane proteins PsbA, PsbB, PsbC, PsbD, PsbE, PsbF, PsbH, PsbI, PsbJ, PsbK, PsbL, PsbM, PsbT, PsbX, PsbY, PsbZ, Psb30/Ycf12, peripheral proteins PsbO, CyanoQ (PsbQ), PsbU, PsbV and a large number of cofactors. It forms dimeric complexes. Requires heme c as cofactor.

The protein resides in the cellular thylakoid membrane. In terms of biological role, one of the extrinsic, lumenal subunits of photosystem II (PSII). PSII is a light-driven water plastoquinone oxidoreductase, using light energy to abstract electrons from H(2)O, generating a proton gradient subsequently used for ATP formation. The extrinsic proteins stabilize the structure of photosystem II oxygen-evolving complex (OEC), the ion environment of oxygen evolution and protect the OEC against heat-induced inactivation. Low-potential cytochrome c that plays a role in the OEC of PSII. The chain is Photosystem II extrinsic protein V from Synechococcus sp. (strain JA-2-3B'a(2-13)) (Cyanobacteria bacterium Yellowstone B-Prime).